We begin with the raw amino-acid sequence, 481 residues long: Probable myosin light chain kinase DDB_G0284661 (481 aa).

Positions 13–269 (YNITDIIGEG…VKQSLAHKWI (257 aa)) constitute a Protein kinase domain. ATP-binding positions include 19 to 27 (IGEGTFSTV) and Lys43. Residue Asp136 is the Proton acceptor of the active site. Disordered regions lie at residues 285–315 (PLIT…PSLK) and 345–427 (SNSH…DDDE). Positions 379-421 (SNNNINNNNDNNDNNNSNSNNSNNNINNFINNNNNNNNNNSNF) are enriched in low complexity.

This sequence belongs to the protein kinase superfamily. CAMK Ser/Thr protein kinase family. CaMK subfamily.

It carries out the reaction L-seryl-[myosin light chain] + ATP = O-phospho-L-seryl-[myosin light chain] + ADP + H(+). The enzyme catalyses L-threonyl-[myosin light chain] + ATP = O-phospho-L-threonyl-[myosin light chain] + ADP + H(+). Its activity is regulated as follows. Does not have a calmodulin-binding domain. Functionally, may phosphorylate a specific serine in the N-terminus of a myosin light chain. The sequence is that of Probable myosin light chain kinase DDB_G0284661 from Dictyostelium discoideum (Social amoeba).